The following is a 114-amino-acid chain: uncharacterized protein (114 aa).

This is an uncharacterized protein from Bacillus subtilis (strain 168).